We begin with the raw amino-acid sequence, 652 residues long: Aorsin (652 aa).

The first 22 residues, 1–22, serve as a signal peptide directing secretion; sequence MRPLSHLSFFNGLLLGLSALSA. Residues 23-215 constitute a propeptide, removed in mature form; it reads ATSVVHERRE…PRPIQQHDVK (193 aa). N-linked (GlcNAc...) asparagine glycosylation occurs at Asn112. Residues 177–211 form a disordered region; that stretch reads VNLNPSSGKPSSIRRRAAASKKTKLPARGPRPIQQ. The segment covering 188–201 has biased composition (basic residues); the sequence is SIRRRAAASKKTKL. N-linked (GlcNAc...) asparagine glycans are attached at residues Asn218 and Asn247. The Peptidase S53 domain occupies 225 to 651; that stretch reads LITPECIRAL…PKMLKLWLDL (427 aa). Catalysis depends on charge relay system residues Glu301 and Asp305. N-linked (GlcNAc...) asparagine glycosylation is found at Asn331 and Asn445. Ser569 (charge relay system) is an active-site residue. Residues Asp610 and Ile611 each contribute to the Ca(2+) site. The N-linked (GlcNAc...) asparagine glycan is linked to Asn613. 2 residues coordinate Ca(2+): Gly629 and Asp631.

Ca(2+) is required as a cofactor. Post-translationally, N-glycosylated. In terms of processing, O-glycosylated.

The protein resides in the secreted. It localises to the extracellular space. Its activity is regulated as follows. Inhibited by antipain and leupeptin. In terms of biological role, serine endopeptidase which hydrolyzes a range of fluorogenic peptide substrates containing the basic residues arginine or lysine at the P1 position and prefers paired basic resides. Also hydrolyzes clupeine and salmine, activates plasminogen and converts trypsinogen to trypsin. This chain is Aorsin, found in Aspergillus oryzae (strain ATCC 42149 / RIB 40) (Yellow koji mold).